We begin with the raw amino-acid sequence, 574 residues long: Serine/arginine repetitive matrix protein 4 (574 aa).

Disordered stretches follow at residues 45-217 (LETP…HGGD), 257-291 (IVQN…ITRS), 366-422 (DLIS…SYSL), 454-508 (YCSS…VSSR), and 526-574 (RSRS…RARR). The segment covering 51-72 (PKDDEEKVKAKDLVTKTHEKNG) has biased composition (basic and acidic residues). 3 stretches are compositionally biased toward basic residues: residues 73-88 (HIKR…RRAR), 102-120 (PKTK…RHRS), and 128-184 (VRKK…HRKA). A compositionally biased stretch (basic and acidic residues) spans 194–217 (NRSEDCEKSGFRDGGRSSDVHGGD). Polar residues predominate over residues 275-289 (GNDTSSPPSSKTGIT). Residues 366-385 (DLISDRNRSPSHDRYEDGTR) show a composition bias toward basic and acidic residues. Low complexity predominate over residues 405–422 (RSLSSGRRSYSRSSSYSL). The span at 454-477 (YCSSCKSRKHSRRRPSSPMRKRRR) shows a compositional bias: basic residues. Basic and acidic residues predominate over residues 478-487 (DSPSHLEARR). Positions 496 to 508 (IPYYRPSPSVSSR) are enriched in low complexity. Positions 526–539 (RSRSCSRSRSRSHS) are enriched in basic residues. The span at 540–559 (HTYSSYRSYSRSSSWNSLYS) shows a compositional bias: low complexity. Residues 560–574 (RRSRSRSRSYSRARR) show a composition bias toward basic residues.

This sequence belongs to the nSR100 family.

The protein localises to the nucleus. Splicing factor specifically required for neural cell differentiation. Acts in conjunction with nPTB/PTBP2 by binding directly to its regulated target transcripts and promotes neural-specific exon inclusion in many genes that function in neural cell differentiation. Required to promote the inclusion of neural-specific exon 10 in nPTB/PTBP2, leading to increased expression of neural-specific nPTB/PTBP2. This Danio rerio (Zebrafish) protein is Serine/arginine repetitive matrix protein 4 (srrm4).